The primary structure comprises 432 residues: Adenylosuccinate synthetase 1 (432 aa).

Residues Gly-12–Arg-18 and Gly-40–Thr-42 each bind GTP. The active-site Proton acceptor is the Asp-13. Asp-13 and Gly-40 together coordinate Mg(2+). IMP-binding positions include Asp-13–Lys-16, Asn-38–His-41, Thr-128, Arg-142, Gln-222, Thr-237, and Arg-301. Catalysis depends on His-41, which acts as the Proton donor. Thr-297 to Arg-303 serves as a coordination point for substrate. Residues Arg-303, Lys-329–Asp-331, and Ser-411–Gly-413 contribute to the GTP site.

This sequence belongs to the adenylosuccinate synthetase family. In terms of assembly, homodimer. Mg(2+) serves as cofactor.

It is found in the cytoplasm. The catalysed reaction is IMP + L-aspartate + GTP = N(6)-(1,2-dicarboxyethyl)-AMP + GDP + phosphate + 2 H(+). The protein operates within purine metabolism; AMP biosynthesis via de novo pathway; AMP from IMP: step 1/2. Its function is as follows. Plays an important role in the de novo pathway of purine nucleotide biosynthesis. Catalyzes the first committed step in the biosynthesis of AMP from IMP. This chain is Adenylosuccinate synthetase 1, found in Chromobacterium violaceum (strain ATCC 12472 / DSM 30191 / JCM 1249 / CCUG 213 / NBRC 12614 / NCIMB 9131 / NCTC 9757 / MK).